Consider the following 1507-residue polypeptide: Paired amphipathic helix protein sin-3 (1507 aa).

Disordered regions lie at residues 1–26 (MYNP…TNNA), 228–286 (PLAL…PPRV), 397–450 (ELGS…MMEE), 543–569 (VDDV…DSSK), and 1349–1434 (IPRE…MDHL). Over residues 16–26 (DQSQQQPTNNA) the composition is skewed to polar residues. Positions 270-279 (RQNRPGRRKK) are enriched in basic residues. Residues 282–352 (GPPRVDEALA…LGFNTFLPTG (71 aa)) form the PAH domain. Residues 427–438 (DGIDDEDDEESG) are compositionally biased toward acidic residues. Composition is skewed to basic and acidic residues over residues 439 to 450 (IEDKNNEEMMEE) and 555 to 568 (EIKK…KDSS). Acidic residues-rich tracts occupy residues 1354-1365 (KDDDDDDDEEGN), 1373-1382 (NVKDEDDGGD), and 1389-1421 (PDDD…DEPE).

In terms of assembly, component of the SIN3S complex, which contains at least sin-3, hda-1, athp-1 and mrg-1. Interacts with ztf-11; the interaction is weak. Interacts with cfp-1. As to expression, expressed in all ray structural cells including ray 6, 7, 8 and 9 of the male tail. Also expressed in the inner labial neurons, socket cells, the cephalic neurons in the head and the ventral nerve cord.

It localises to the nucleus. Functionally, probable transcriptional repressor required for the deposition of dimethylated 'Lys-9' of histone H3 (H3K9me2) on asynapsed chromosome pairs (both autosomes and sex chromosomes) during meiosis, but this does not seem to solely affect the transcriptional status. Plays a role in ray fusion and patterning in the male tail, and this may be through activity of the histone deacetylase complex (HDAC). The polypeptide is Paired amphipathic helix protein sin-3 (Caenorhabditis elegans).